The primary structure comprises 529 residues: Transcription factor kayak (529 aa).

The segment covering 118-134 has biased composition (polar residues); the sequence is LQGTDSDNSNASWADAQ. 2 disordered regions span residues 118-166 and 180-239; these read LQGT…SVNG and NAGR…CRKR. Low complexity-rich tracts occupy residues 142–153 and 182–201; these read TDTSSAHTDSTS and GRGSTQGSNTNTSNSATPAR. Positions 219–282 constitute a bZIP domain; it reads EEKRRIRRER…NQLEFFLRAH (64 aa). The basic motif stretch occupies residues 221–240; that stretch reads KRRIRRERNKQAAARCRKRR. Positions 247–275 are leucine-zipper; it reads LTYEVEQLEKKRDGLKKEMETLTDVKNQL. Disordered regions lie at residues 311–390 and 493–529; these read AGSC…PMST and DGGTGLTPVSGPLVPSQNKHPLELPTPTAEPSKLVSL. Positions 315–332 are enriched in low complexity; sequence DSGSSSHHNNNSNDSSNG. Residues 340–350 are compositionally biased toward polar residues; the sequence is SLNSTGRSNSP. A Phosphoserine modification is found at Ser349. Low complexity predominate over residues 363 to 375; that stretch reads DGGLDSSCLLDQD. The span at 376–387 shows a compositional bias: pro residues; the sequence is GPPPSKRFPLPP.

It belongs to the bZIP family. Fos subfamily. As to quaternary structure, homodimer. Heterodimer with Jra. The kay-Jra heterodimer binds more stably to the AP-1 site than either of the two proteins alone.

Its subcellular location is the nucleus. Its function is as follows. Developmentally regulated transcription factor AP-1 binds and recognizes the enhancer DNA sequence: 5'-TGA[CG]TCA-3'. May play a role in the function or determination of a particular subset of cells in the developing embryo. Is able to carry out its function either independently of or in conjunction with Jra. In Drosophila ananassae (Fruit fly), this protein is Transcription factor kayak.